The sequence spans 343 residues: tRNA N6-adenosine threonylcarbamoyltransferase (343 aa).

His-111 and His-115 together coordinate Fe cation. Substrate is bound by residues 135 to 139, Asp-168, Gly-181, and Asn-280; that span reads VLSGG. Residue Asp-306 coordinates Fe cation.

The protein belongs to the KAE1 / TsaD family. It depends on Fe(2+) as a cofactor.

Its subcellular location is the cytoplasm. The catalysed reaction is L-threonylcarbamoyladenylate + adenosine(37) in tRNA = N(6)-L-threonylcarbamoyladenosine(37) in tRNA + AMP + H(+). In terms of biological role, required for the formation of a threonylcarbamoyl group on adenosine at position 37 (t(6)A37) in tRNAs that read codons beginning with adenine. Is involved in the transfer of the threonylcarbamoyl moiety of threonylcarbamoyl-AMP (TC-AMP) to the N6 group of A37, together with TsaE and TsaB. TsaD likely plays a direct catalytic role in this reaction. The polypeptide is tRNA N6-adenosine threonylcarbamoyltransferase (Protochlamydia amoebophila (strain UWE25)).